The chain runs to 359 residues: 5-amino-6-(D-ribitylamino)uracil--L-tyrosine 4-hydroxyphenyl transferase (359 aa).

In terms of domain architecture, Radical SAM core spans 45 to 282; that stretch reads VTYVVNANIN…VYAISRIFFK (238 aa). [4Fe-4S] cluster is bound by residues Cys-59, Cys-63, and Cys-66.

This sequence belongs to the radical SAM superfamily. CofH family. In terms of assembly, consists of two subunits, CofG and CofH. The cofactor is [4Fe-4S] cluster.

The enzyme catalyses 5-amino-6-(D-ribitylamino)uracil + L-tyrosine + S-adenosyl-L-methionine = 5-amino-5-(4-hydroxybenzyl)-6-(D-ribitylimino)-5,6-dihydrouracil + 2-iminoacetate + 5'-deoxyadenosine + L-methionine + H(+). It participates in cofactor biosynthesis; coenzyme F0 biosynthesis. In terms of biological role, catalyzes the radical-mediated synthesis of 5-amino-5-(4-hydroxybenzyl)-6-(D-ribitylimino)-5,6-dihydrouracil from 5-amino-6-(D-ribitylamino)uracil and L-tyrosine. The polypeptide is 5-amino-6-(D-ribitylamino)uracil--L-tyrosine 4-hydroxyphenyl transferase (Methanococcus maripaludis (strain C7 / ATCC BAA-1331)).